Here is a 120-residue protein sequence, read N- to C-terminus: Dynein 11 kDa light chain, flagellar outer arm (120 aa).

It belongs to the dynein light chain family. In terms of assembly, consists of at least 3 heavy chains (alpha, beta and gamma), 2 intermediate chains and 8 light chains.

The protein resides in the cytoplasm. Its subcellular location is the cytoskeleton. The protein localises to the flagellum axoneme. The sequence is that of Dynein 11 kDa light chain, flagellar outer arm from Chlamydomonas reinhardtii (Chlamydomonas smithii).